We begin with the raw amino-acid sequence, 365 residues long: Glycosyltransferase 8 domain-containing protein 1 (365 aa).

At 1 to 4 the chain is on the cytoplasmic side; that stretch reads MTVR. Residues 5-22 form a helical; Signal-anchor for type II membrane protein membrane-spanning segment; it reads RVNVVILVLLVVAFLIVL. At 23 to 365 the chain is on the lumenal side; that stretch reads HRNLLNLNDF…HPIRKHVEEK (343 aa). N-linked (GlcNAc...) asparagine glycans are attached at residues Asn102, Asn181, Asn245, and Asn253.

This sequence belongs to the glycosyltransferase 8 family.

The protein resides in the membrane. The sequence is that of Glycosyltransferase 8 domain-containing protein 1 (glt8d1) from Danio rerio (Zebrafish).